We begin with the raw amino-acid sequence, 264 residues long: MGRIDNTFAKLAKNKKKALVTFITAGDPDLETTESLIIDLEKAGADLIELGVPFSDPMADGPTIQLSSERALAAGTTLPKILATVKSVRRKTQIPIILMGYYNPIFLHGVERFVSDAVAAGVDGVLLVDLPPEEAGEFKAIADRSGLAVIFLLTPTSDEERIRKVAHLGSGFIYYVSVTGVTGARSSVAENVFSDVQKIRKRVTLPVVVGFGISDPAQAGSIASVADGVVVGSALVRQFEQFSGKELHTKLSTMVSALKAGIAA.

Active-site proton acceptor residues include E49 and D60.

It belongs to the TrpA family. In terms of assembly, tetramer of two alpha and two beta chains.

The catalysed reaction is (1S,2R)-1-C-(indol-3-yl)glycerol 3-phosphate + L-serine = D-glyceraldehyde 3-phosphate + L-tryptophan + H2O. Its pathway is amino-acid biosynthesis; L-tryptophan biosynthesis; L-tryptophan from chorismate: step 5/5. Its function is as follows. The alpha subunit is responsible for the aldol cleavage of indoleglycerol phosphate to indole and glyceraldehyde 3-phosphate. In Geotalea daltonii (strain DSM 22248 / JCM 15807 / FRC-32) (Geobacter daltonii), this protein is Tryptophan synthase alpha chain.